The sequence spans 239 residues: MGRKWNNIKDKKASKDANTSRIYAKFGREIYVAAKQGEPDPESNQALRVVLERAKTYNVPRTIIDRAVEKAKGGSEENYDELRYEGFGPNGAMVIVDTLTNNVNRTAADVRAAFSKNGGNMGVNGSVAYMFDATAVIGLEGKTSDEVLEILMEADVDARDILEEEDAVIVYAEPDQFHAVQSALKDAGVEEFTVAELTMLAQNDVTLPEDAQAQFEKMVDALEDLEDVQQVYHNVDLGE.

It belongs to the TACO1 family. YeeN subfamily.

The protein localises to the cytoplasm. This chain is Probable transcriptional regulatory protein BCQ_0605, found in Bacillus cereus (strain Q1).